Consider the following 433-residue polypeptide: 26S proteasome regulatory subunit 7 (433 aa).

The disordered stretch occupies residues 1–22; sequence MPDYLGADQRKTKEDEKDDKPI. The span at 8–22 shows a compositional bias: basic and acidic residues; the sequence is DQRKTKEDEKDDKPI. Residue lysine 116 is modified to N6-acetyllysine. An ATP-binding site is contributed by 216 to 223; that stretch reads GPPGTGKT. Position 422 is an N6-acetyllysine (lysine 422).

Belongs to the AAA ATPase family. Component of the 19S proteasome regulatory particle complex. The 26S proteasome consists of a 20S core particle (CP) and two 19S regulatory subunits (RP). The regulatory particle is made of a lid composed of 9 subunits, a base containing 6 ATPases including PSMC2 and few additional components. Interacts with NDC80 and SQSTM1. Interacts with PAAF1. Interacts with TRIM5. Monoubiquitinated by RNF181. In terms of processing, phosphorylated. Dephosphorylated by UBLCP1 which impairs PSMC2 ATPase activity and disrupts 26S proteasome assembly.

It is found in the cytoplasm. Functionally, component of the 26S proteasome, a multiprotein complex involved in the ATP-dependent degradation of ubiquitinated proteins. This complex plays a key role in the maintenance of protein homeostasis by removing misfolded or damaged proteins, which could impair cellular functions, and by removing proteins whose functions are no longer required. Therefore, the proteasome participates in numerous cellular processes, including cell cycle progression, apoptosis, or DNA damage repair. PSMC2 belongs to the heterohexameric ring of AAA (ATPases associated with diverse cellular activities) proteins that unfolds ubiquitinated target proteins that are concurrently translocated into a proteolytic chamber and degraded into peptides. In Rattus norvegicus (Rat), this protein is 26S proteasome regulatory subunit 7 (Psmc2).